We begin with the raw amino-acid sequence, 1282 residues long: ATP-dependent helicase/nuclease subunit A (1282 aa).

The UvrD-like helicase ATP-binding domain occupies 10–481 (SKWTDSQRQV…IELQENFRSS (472 aa)). Position 31–38 (31–38 (AGAGAGKT)) interacts with ATP. The UvrD-like helicase C-terminal domain maps to 516 to 820 (KPRELYLNED…RLMSIHKSKG (305 aa)).

Belongs to the helicase family. AddA subfamily. In terms of assembly, heterodimer of AddA and AddB/RexB. Mg(2+) is required as a cofactor.

The catalysed reaction is Couples ATP hydrolysis with the unwinding of duplex DNA by translocating in the 3'-5' direction.. It catalyses the reaction ATP + H2O = ADP + phosphate + H(+). The heterodimer acts as both an ATP-dependent DNA helicase and an ATP-dependent, dual-direction single-stranded exonuclease. Recognizes the chi site generating a DNA molecule suitable for the initiation of homologous recombination. The AddA nuclease domain is required for chi fragment generation; this subunit has the helicase and 3' -&gt; 5' nuclease activities. In Natranaerobius thermophilus (strain ATCC BAA-1301 / DSM 18059 / JW/NM-WN-LF), this protein is ATP-dependent helicase/nuclease subunit A.